The primary structure comprises 28 residues: Omega-gliadin (28 aa).

A disordered region spans residues 1–28 (ARQLNPSDQELQSPQQLYPQQPYPQQPY). A compositionally biased stretch (low complexity) spans 9 to 20 (QELQSPQQLYPQ).

The chain is Omega-gliadin from Triticum monococcum (Einkorn wheat).